We begin with the raw amino-acid sequence, 218 residues long: Ras-related protein Rab11E (218 aa).

20–27 (GDSGVGKS) lines the GTP pocket. Positions 42–50 (SKSTIGVEF) match the Effector region motif. GTP contacts are provided by residues 68-72 (DTAGQ) and 126-129 (NKSD). 2 S-geranylgeranyl cysteine lipidation sites follow: Cys215 and Cys216.

The protein belongs to the small GTPase superfamily. Rab family.

It localises to the cell membrane. This chain is Ras-related protein Rab11E (RAB11E), found in Lotus japonicus (Lotus corniculatus var. japonicus).